We begin with the raw amino-acid sequence, 3147 residues long: Probable polyketide synthase 1 (3147 aa).

The Ketosynthase family 3 (KS3) domain maps to 12–457; that stretch reads SSDVAVIGVG…GSNCHLIIQE (446 aa). Catalysis depends on for beta-ketoacyl synthase activity residues cysteine 180 and histidine 319. Residues 345-369 form a disordered region; that stretch reads QLNNFSTDGNDNDDDDDDNTSPEPL. Positions 354–364 are enriched in acidic residues; it reads NDNDDDDDDNT. The For beta-ketoacyl synthase activity role is filled by histidine 380. Residues 672–705 form an acyl/malonyl transferase region; it reads GIYPSISVGHSFGEVSSYYLSGIISLETACKIVY. Serine 682 acts as the For acyl/malonyl transferase activity in catalysis. The segment at 976 to 1127 is N-terminal hotdog fold; that stretch reads NRLEGPTTSL…ATISLEQQQP (152 aa). Positions 976 to 1298 constitute a PKS/mFAS DH domain; sequence NRLEGPTTSL…IKSTNPKSTK (323 aa). Histidine 1014 functions as the Proton acceptor; for dehydratase activity in the catalytic mechanism. The C-terminal hotdog fold stretch occupies residues 1149-1298; it reads DISKLDKFEL…IKSTNPKSTK (150 aa). Aspartate 1209 functions as the Proton donor; for dehydratase activity in the catalytic mechanism. Residues 2568–2645 form the Carrier domain; sequence SSNISLQDKI…SFLEKVNGLS (78 aa). Residue serine 2605 is modified to O-(pantetheine 4'-phosphoryl)serine. The interval 2723-2747 is disordered; the sequence is PSLSQSDVLKTPPIKSLNNTKNSSL. Residues 2738–2747 show a composition bias toward polar residues; the sequence is SLNNTKNSSL. Residues 2789–3147 form a chalcone synthase region; it reads VLGIGISVPG…FEGCFLKNVV (359 aa). Residue cysteine 2930 is part of the active site.

In the C-terminal section; belongs to the thiolase-like superfamily. Chalcone/stilbene synthases family. As to quaternary structure, homodimer. Pantetheine 4'-phosphate is required as a cofactor.

The enzyme catalyses (E)-4-coumaroyl-CoA + 3 malonyl-CoA + 3 H(+) = 2',4,4',6'-tetrahydroxychalcone + 3 CO2 + 4 CoA. The protein operates within secondary metabolite biosynthesis; flavonoid biosynthesis. In terms of biological role, probable polyketide synthase. Produces only acylpyrones; in vitro. The polypeptide is Probable polyketide synthase 1 (stlA) (Dictyostelium discoideum (Social amoeba)).